A 206-amino-acid chain; its full sequence is Ras-related protein Rab-18 (206 aa).

An N-acetylmethionine modification is found at Met-1. Residues Ser-17, Gly-20, Lys-21, Ser-22, Ser-23, Asp-34, Pro-35, Thr-40, Gly-66, Lys-123, and Asp-125 each contribute to the GTP site. Ser-22 provides a ligand contact to Mg(2+). 2 consecutive short sequence motifs (switch) follow at residues 31–45 and 63–80; these read DTFDPELAATIGVDF and DTAGQERFRTLTPSYYRG. A Mg(2+)-binding site is contributed by Thr-40. Ser-144 carries the phosphoserine modification. Ala-152 contacts GTP. A lipid anchor (S-palmitoyl cysteine) is attached at Cys-199. Cys-203 carries the cysteine methyl ester modification. Cys-203 carries S-geranylgeranyl cysteine lipidation. Residues 204 to 206 constitute a propeptide, removed in mature form; the sequence is SVL.

This sequence belongs to the small GTPase superfamily. Rab family. In terms of assembly, interacts (in GTP-bound form) with ZFYVE1. Interacts with ZW10 and this interaction is enhanced in the presence of ZFYVE1. Interacts with BSCL2. As to quaternary structure, (Microbial infection) Interacts with Hepatitis C virus (HCV) non-structural protein 5A; this interaction may promote the association of NS5A and other viral replicase components with lipid droplets. Mg(2+) serves as cofactor. In terms of tissue distribution, ubiquitous.

It localises to the endoplasmic reticulum membrane. Its subcellular location is the golgi apparatus. The protein localises to the cis-Golgi network membrane. The protein resides in the lipid droplet. It is found in the apical cell membrane. It carries out the reaction GTP + H2O = GDP + phosphate + H(+). With respect to regulation, regulated by guanine nucleotide exchange factor (GEF) RAB3GAP1-RAB3GAP2 complex at the cis-Golgi membrane which promotes the exchange of bound GDP for free GTP. Regulated by GTPase activating protein (GAP) TBC1D20 at the ER membrane which increases the GTP hydrolysis activity. Inhibited by GDP dissociation inhibitors (GDIs) which prevent Rab-GDP dissociation. Functionally, the small GTPases Rab are key regulators of intracellular membrane trafficking, from the formation of transport vesicles to their fusion with membranes. Rabs cycle between an inactive GDP-bound form and an active GTP-bound form that is able to recruit to membranes different sets of downstream effectors directly responsible for vesicle formation, movement, tethering and fusion. RAB18 is required for the localization of ZFYVE1 to lipid droplets and for its function in mediating the formation of endoplasmic reticulum-lipid droplets (ER-LD) contacts. Also required for maintaining endoplasmic reticulum structure. Plays a role in apical endocytosis/recycling. Plays a key role in eye and brain development and neurodegeneration. This is Ras-related protein Rab-18 from Homo sapiens (Human).